We begin with the raw amino-acid sequence, 406 residues long: Autotransporter heptosyltransferase TibC (406 aa).

ADP-D-glycero-beta-D-manno-heptose-binding residues include Thr107, Leu108, and Gly109. Asp110 acts as the Proton acceptor in catalysis. Gln224, Thr226, Lys230, Arg257, Leu281, Gly302, and Glu326 together coordinate ADP-D-glycero-beta-D-manno-heptose. Positions 339, 342, 358, and 370 each coordinate Fe(3+).

The protein belongs to the glycosyltransferase 9 family. Homododecamer composed of 6 homodimers forming a ring. It depends on Fe(3+) as a cofactor.

The catalysed reaction is ADP-D-glycero-beta-D-manno-heptose + L-seryl-[protein] = O-(D-glycero-alpha-D-manno-heptosyl)-L-seryl-[protein] + ADP + H(+). Its function is as follows. Glycosylates adhesin TibA. Specifically adds anomer D-glycero-beta-D-manno-heptose. Cannot use ADP-L-glycero-beta-D-manno-heptose as a sugar donor. The sequence is that of Autotransporter heptosyltransferase TibC from Escherichia coli O78:H11 (strain H10407 / ETEC).